We begin with the raw amino-acid sequence, 156 residues long: Ribosomal RNA large subunit methyltransferase H (156 aa).

S-adenosyl-L-methionine-binding positions include Leu73, Gly104, and 123 to 128 (LSALTL).

Belongs to the RNA methyltransferase RlmH family. In terms of assembly, homodimer.

The protein resides in the cytoplasm. It carries out the reaction pseudouridine(1915) in 23S rRNA + S-adenosyl-L-methionine = N(3)-methylpseudouridine(1915) in 23S rRNA + S-adenosyl-L-homocysteine + H(+). Specifically methylates the pseudouridine at position 1915 (m3Psi1915) in 23S rRNA. The polypeptide is Ribosomal RNA large subunit methyltransferase H (Psychromonas ingrahamii (strain DSM 17664 / CCUG 51855 / 37)).